A 309-amino-acid polypeptide reads, in one-letter code: MSPAMNADNPGAAATAVAAIAPALKAEILAEALPYIRKFHGKTIVVKYGGNAMTEEKLKHGFARDVILLKLVGMNPVVVHGGGPQIDEALKKVGKVGTFVQGMRVTDEETMEVVEWVLGGEVQQDIVMLINQYGGQAVGLTGKDGGLIRAKRLQMPDRENPGAFIDIGYVGDIEAINPAVVKALQDDAFIPVISPIGFSDDGQAYNINADVVAGKMAEILKAEKLVMMTNIPGVMDKKGNLLTDLSAREIEELFADGTISGGMLPKISSALDAAKSGVHSVHIIDGRIEHSLLLEILTEQAFGTMIRSH.

Substrate is bound by residues 82-83 (GG), arginine 104, and asparagine 206.

It belongs to the acetylglutamate kinase family. ArgB subfamily.

The protein localises to the cytoplasm. It carries out the reaction N-acetyl-L-glutamate + ATP = N-acetyl-L-glutamyl 5-phosphate + ADP. It functions in the pathway amino-acid biosynthesis; L-arginine biosynthesis; N(2)-acetyl-L-ornithine from L-glutamate: step 2/4. Functionally, catalyzes the ATP-dependent phosphorylation of N-acetyl-L-glutamate. This chain is Acetylglutamate kinase, found in Cupriavidus pinatubonensis (strain JMP 134 / LMG 1197) (Cupriavidus necator (strain JMP 134)).